The sequence spans 210 residues: Peptidyl-tRNA hydrolase (210 aa).

Tyr-14 provides a ligand contact to tRNA. The active-site Proton acceptor is His-19. TRNA-binding residues include Phe-64, Asn-66, and Asn-112.

It belongs to the PTH family. As to quaternary structure, monomer.

The protein resides in the cytoplasm. The catalysed reaction is an N-acyl-L-alpha-aminoacyl-tRNA + H2O = an N-acyl-L-amino acid + a tRNA + H(+). Functionally, hydrolyzes ribosome-free peptidyl-tRNAs (with 1 or more amino acids incorporated), which drop off the ribosome during protein synthesis, or as a result of ribosome stalling. Its function is as follows. Catalyzes the release of premature peptidyl moieties from peptidyl-tRNA molecules trapped in stalled 50S ribosomal subunits, and thus maintains levels of free tRNAs and 50S ribosomes. The chain is Peptidyl-tRNA hydrolase from Methylorubrum populi (strain ATCC BAA-705 / NCIMB 13946 / BJ001) (Methylobacterium populi).